We begin with the raw amino-acid sequence, 116 residues long: Large ribosomal subunit protein bL17 (116 aa).

Belongs to the bacterial ribosomal protein bL17 family. Part of the 50S ribosomal subunit. Contacts protein L32.

In Dictyoglomus thermophilum (strain ATCC 35947 / DSM 3960 / H-6-12), this protein is Large ribosomal subunit protein bL17.